Reading from the N-terminus, the 488-residue chain is Protein kinase C and casein kinase substrate in neurons 2 protein (488 aa).

Positions 11–282 (VEVSSDSFWE…SIKAADAVED (272 aa)) constitute an F-BAR domain. A coiled-coil region spans residues 25 to 274 (KRTVKRIDDG…GIYRELEQSI (250 aa)). K53 is modified (N6-acetyllysine). The span at 163-176 (CKEEKLAVSREANS) shows a compositional bias: basic and acidic residues. Residues 163–183 (CKEEKLAVSREANSKADPSLN) are disordered. A Phosphoserine modification is found at S273. S315 bears the Phosphoserine; by PKC mark. The tract at residues 316–429 (RREKKKAADG…PFDEDTTSGT (114 aa)) is disordered. Positions 329 to 364 (TGINQTGDQSGQNKPSSNLSVPSNPAQSTQLQSSYN) are enriched in polar residues. The NPF1 signature appears at 364–366 (NPF). S375 carries the post-translational modification Phosphoserine; by IKKB. Over residues 386–396 (NVSSYEKTQNY) the composition is skewed to polar residues. S401 is subject to Phosphoserine. Polar residues predominate over residues 406–418 (NNPFSSTDANGDS). Positions 407-409 (NPF) match the NPF2 motif. Residues 419-421 (NPF) carry the NPF3 motif. The SH3 domain occupies 428–488 (GTEVRVRALY…YPANYVEAIQ (61 aa)). The residue at position 448 (S448) is a Phosphoserine.

This sequence belongs to the PACSIN family. In terms of assembly, homodimer. May form heterooligomers with other PACSINs. Interacts (via NPF motifs) with EHD1 (via EH domain). Interacts with EHD3. Interacts (via the SH3 domain) with MICALL1. Interacts with RAC1. Interacts (via SH3 domain) with DNM1, SYN1, SYNJ1 and WASL. Interacts with CAV1. Interacts with TRPV4. Forms a complex with EHD4 and MICALL1; the complex controls CDH5 trafficking and coordinates angiogenesis. Post-translationally, phosphorylated by casein kinase 2 (CK2) and protein kinase C (PKC). Phosphorylation by PKC probably decreases the membrane binding and tubulation capacities of PACSIN2, thereby modulating the lifetime of caveolae. In terms of tissue distribution, widely expressed (at protein level). Isoforms 1/3 are predominantly expressed in heart and in PC-12 cells, a pheochromocytoma cell line (at protein level). Isoforms 2/4 are widely expressed with highest levels in muscle, testis and brain (at protein level).

It is found in the cytoplasm. Its subcellular location is the cytoskeleton. The protein localises to the cytoplasmic vesicle membrane. The protein resides in the cell projection. It localises to the ruffle membrane. It is found in the early endosome. Its subcellular location is the recycling endosome membrane. The protein localises to the cell membrane. The protein resides in the membrane. It localises to the caveola. It is found in the cell junction. Its subcellular location is the adherens junction. Its function is as follows. Regulates the morphogenesis and endocytosis of caveolae. Lipid-binding protein that is able to promote the tubulation of the phosphatidic acid-containing membranes it preferentially binds. Plays a role in intracellular vesicle-mediated transport. Involved in the endocytosis of cell-surface receptors like the EGF receptor, contributing to its internalization in the absence of EGF stimulus. Facilitates endothelial front-rear polarity during migration by recruiting EHD4 and MICALL1 to asymmetric adherens junctions between leader and follower cells. This chain is Protein kinase C and casein kinase substrate in neurons 2 protein (Pacsin2), found in Rattus norvegicus (Rat).